A 351-amino-acid chain; its full sequence is Ion-translocating oxidoreductase complex subunit D (351 aa).

4 helical membrane passes run 18 to 38 (IMLLVILACIPGIIAQTYFFG), 40 to 60 (GSLIQVMLAMITALLAEGAVL), 87 to 107 (LPPLAPWWMIVLGTLFAIVIA), and 121 to 141 (PAMVGYVVLLISFPVQMTSWL). Thr185 bears the FMN phosphoryl threonine mark. The next 5 helical transmembrane spans lie at 211–231 (VLAGLGWQWVNTGFLVGGLLL), 241–261 (IPVSFLLALGGCAAVSWMIAP), 264–284 (FASPMLHLFSGATMLGAFFIA), 298–318 (LIFGALIGILVWLIRVYGGYP), and 321–341 (VAFAVLLANITVPLIDHYTQP).

This sequence belongs to the NqrB/RnfD family. In terms of assembly, the complex is composed of six subunits: RnfA, RnfB, RnfC, RnfD, RnfE and RnfG. Requires FMN as cofactor.

The protein resides in the cell inner membrane. In terms of biological role, part of a membrane-bound complex that couples electron transfer with translocation of ions across the membrane. This is Ion-translocating oxidoreductase complex subunit D from Yersinia pestis.